We begin with the raw amino-acid sequence, 344 residues long: Arginine N-succinyltransferase (344 aa).

Leucine 125 is a binding site for succinyl-CoA. Histidine 229 functions as the Proton donor in the catalytic mechanism.

Belongs to the arginine N-succinyltransferase family.

It carries out the reaction succinyl-CoA + L-arginine = N(2)-succinyl-L-arginine + CoA + H(+). It participates in amino-acid degradation; L-arginine degradation via AST pathway; L-glutamate and succinate from L-arginine: step 1/5. Catalyzes the transfer of succinyl-CoA to arginine to produce N(2)-succinylarginine. The chain is Arginine N-succinyltransferase from Citrobacter koseri (strain ATCC BAA-895 / CDC 4225-83 / SGSC4696).